A 208-amino-acid chain; its full sequence is Thymidylate kinase (208 aa).

12–19 contributes to the ATP binding site; sequence GVDGAGKS.

It belongs to the thymidylate kinase family.

It catalyses the reaction dTMP + ATP = dTDP + ADP. Functionally, phosphorylation of dTMP to form dTDP in both de novo and salvage pathways of dTTP synthesis. The protein is Thymidylate kinase of Bordetella bronchiseptica (strain ATCC BAA-588 / NCTC 13252 / RB50) (Alcaligenes bronchisepticus).